A 68-amino-acid polypeptide reads, in one-letter code: DNA-directed RNA polymerase subunit omega (68 aa).

Belongs to the RNA polymerase subunit omega family. In terms of assembly, the RNAP catalytic core consists of 2 alpha, 1 beta, 1 beta' and 1 omega subunit. When a sigma factor is associated with the core the holoenzyme is formed, which can initiate transcription.

It carries out the reaction RNA(n) + a ribonucleoside 5'-triphosphate = RNA(n+1) + diphosphate. Promotes RNA polymerase assembly. Latches the N- and C-terminal regions of the beta' subunit thereby facilitating its interaction with the beta and alpha subunits. The chain is DNA-directed RNA polymerase subunit omega from Desulfatibacillum aliphaticivorans.